Here is a 321-residue protein sequence, read N- to C-terminus: F420-non-reducing hydrogenase iron-sulfur subunit G (321 aa).

Belongs to the [NiFe]/[NiFeSe] hydrogenase small subunit family. The F420-non-reducing hydrogenase is composed of three subunits; MvhA, MvhD and MvhG. It forms a complex with the heterodisulfide reductase (Hdr).

Its subcellular location is the cytoplasm. In terms of biological role, part of a complex that provides reducing equivalents for heterodisulfide reductase. The protein is F420-non-reducing hydrogenase iron-sulfur subunit G (mvhG) of Archaeoglobus profundus (strain DSM 5631 / JCM 9629 / NBRC 100127 / Av18).